The chain runs to 399 residues: Methylthioribose kinase (399 aa).

ATP is bound by residues Asn-40, Lys-57, and 111–113 (EDL). Asp-229 serves as a coordination point for substrate. 246 to 248 (DAE) contacts ATP. Arg-344 serves as a coordination point for substrate.

The protein belongs to the methylthioribose kinase family. Homodimer.

It carries out the reaction 5-(methylsulfanyl)-D-ribose + ATP = 5-(methylsulfanyl)-alpha-D-ribose 1-phosphate + ADP + H(+). It functions in the pathway amino-acid biosynthesis; L-methionine biosynthesis via salvage pathway; S-methyl-5-thio-alpha-D-ribose 1-phosphate from S-methyl-5'-thioadenosine (hydrolase route): step 2/2. In terms of biological role, catalyzes the phosphorylation of methylthioribose into methylthioribose-1-phosphate. The chain is Methylthioribose kinase from Yersinia enterocolitica serotype O:8 / biotype 1B (strain NCTC 13174 / 8081).